A 339-amino-acid chain; its full sequence is MKIAVDAMGGDLAPREIVRGAVAAAGEGSAEIILVGDQRRLEEELALLHPSGRIEIYHTDQVITMDEQPALGLRRKREASIVVATRLVKEGRAEAVVSAGSTGTQMAAALLILGRSGKIQRPAIATLIPTLKGPKLLLDVGANVDCRPEHLYEFALMGNLYAARVMGIPNPRVGLLNIGTEACKGNEQTLGAYNLLRGAPLNFIGNVEAREILFGETDVIVCDGFVGNAILKFGEGLGQALFTMISREVNKSLRSRMGAALLLPALRGLKKQVDYTEYGGAPLLGVQGISIICHGSSNARAIKNAIKVAVRCVNQGLVTALGDLPGASEERMVKGCQSN.

This sequence belongs to the PlsX family. In terms of assembly, homodimer. Probably interacts with PlsY.

It is found in the cytoplasm. The catalysed reaction is a fatty acyl-[ACP] + phosphate = an acyl phosphate + holo-[ACP]. It participates in lipid metabolism; phospholipid metabolism. In terms of biological role, catalyzes the reversible formation of acyl-phosphate (acyl-PO(4)) from acyl-[acyl-carrier-protein] (acyl-ACP). This enzyme utilizes acyl-ACP as fatty acyl donor, but not acyl-CoA. In Moorella thermoacetica (strain ATCC 39073 / JCM 9320), this protein is Phosphate acyltransferase.